Reading from the N-terminus, the 366-residue chain is Protein sigma-NS (366 aa).

The tract at residues 1 to 11 (MASSLRAAISK) is important for ssRNA-binding and formation of complexes.

Belongs to the orthoreovirus sigma-NS protein family. Homooligomer; in presence of RNA. Interacts with protein mu-NS; this interaction allows the localization of sigma-NS to the viral factories. Interacts with host G3BP1 (via C-terminus); this interaction induces the relocalization of G3BP1 and other SG proteins to the viral factories periphery.

The protein localises to the host cytoplasm. Protein that binds to ssRNA and participates with protein mu-NS in forming the matrix of viral factories, which are large inclusions in the host cytoplasm where replication intermediates are assembled and viral RNA replication takes place. Plays a role in the inhibition of the integrated stress response (ISR) to escape from host cell translational shutoff. Participates in the disruption of stress granules (SG) through its association with host G3BP1 and mu-NS. This is Protein sigma-NS (S3) from Mammalia (T3D).